The chain runs to 456 residues: MASSSGSNHICSRVIDHSHVPEFEVATWIKITLILVYLIIFVVGILGNSVTIRVTQVLQKKGYLQKEVTDHMVSLACSDILVFLIGMPMEFYSIIWNPLTTPSYALSCKLHTFLFETCSYATLLHVLTLSFERYIAICHPFKYKAVSGPRQVKLLIGFVWVTSALVALPLLFAMGIEYPLVNVPTHKGLNCNLSRTRHHDEPGNSNMSICTNLSNRWEVFQSSIFGAFAVYLVVLASVAFMCWNMMKVLMKSKQGTLAGTGPQLQLRKSESEESRTARRQTIIFLRLIVVTLAVCWMPNQIRRIMAAAKPKHDWTRTYFRAYMILLPFSDTFFYLSSVVNPLLYNVSSQQFRKVFWQVLCCRLTLQHANQEKRQRARFISTKDSTSSARSPLIFLASRRSNSSSRRTNKVFLSTFQTEAKPGEAKPQPLSPESPQTGSETKPAGSTTENSLQEQEV.

The Extracellular portion of the chain corresponds to 1–34 (MASSSGSNHICSRVIDHSHVPEFEVATWIKITLI). Disulfide bonds link Cys11–Cys191 and Cys108–Cys210. His17 and His19 together coordinate Zn(2+). The helical transmembrane segment at 35-55 (LVYLIIFVVGILGNSVTIRVT) threads the bilayer. Over 56–69 (QVLQKKGYLQKEVT) the chain is Cytoplasmic. Residues 70–89 (DHMVSLACSDILVFLIGMPM) traverse the membrane as a helical segment. Topologically, residues 90–109 (EFYSIIWNPLTTPSYALSCK) are extracellular. The helical transmembrane segment at 110–131 (LHTFLFETCSYATLLHVLTLSF) threads the bilayer. Residues 132–151 (ERYIAICHPFKYKAVSGPRQ) are Cytoplasmic-facing. Residues 152-172 (VKLLIGFVWVTSALVALPLLF) traverse the membrane as a helical segment. At 173–217 (AMGIEYPLVNVPTHKGLNCNLSRTRHHDEPGNSNMSICTNLSNRW) the chain is on the extracellular side. N-linked (GlcNAc...) asparagine glycans are attached at residues Asn192 and Asn206. Residues 218–242 (EVFQSSIFGAFAVYLVVLASVAFMC) form a helical membrane-spanning segment. The Cytoplasmic portion of the chain corresponds to 243–283 (WNMMKVLMKSKQGTLAGTGPQLQLRKSESEESRTARRQTII). A helical membrane pass occupies residues 284–305 (FLRLIVVTLAVCWMPNQIRRIM). Residues 306–323 (AAAKPKHDWTRTYFRAYM) are Extracellular-facing. A helical transmembrane segment spans residues 324 to 344 (ILLPFSDTFFYLSSVVNPLLY). Topologically, residues 345-456 (NVSSQQFRKV…TENSLQEQEV (112 aa)) are cytoplasmic. Ser397 carries the post-translational modification Phosphoserine. Residues 415–456 (FQTEAKPGEAKPQPLSPESPQTGSETKPAGSTTENSLQEQEV) are disordered. Residues 430-456 (SPESPQTGSETKPAGSTTENSLQEQEV) are compositionally biased toward polar residues.

Belongs to the G-protein coupled receptor 1 family. Interacts with HTR1A. Interacts with GALR1. Expression is detected in septumamygdala, parietal cells, enterocytes, neurons and pancreas, in peripheral organs such as the duodenum and kidney but not in the pituitary and hypothalamus.

The protein resides in the cell membrane. Functionally, zinc-sensing receptor that can sense changes in extracellular Zn(2+), mediate Zn(2+) signal transmission, and participates in the regulation of numerous physiological processes including glucose homeostasis regulation, gastrointestinal mobility, hormone secretion and cell death. Activation by Zn(2+) in keratinocytes increases the intracellular concentration of Ca(2+) and activates the ERK/MAPK and PI3K/AKT signaling pathways leading to epithelial repair. Plays an essential role in normal wound healing by inducing the production of cytokines including the major inflammatory cytokine IL6 via the PKC/MAPK/CEBPB pathway. Regulates adipose tissue metabolism, especially lipolysis, and regulates the function of lipases, such as hormone-sensitive lipase and adipose triglyceride lipase. Plays a role in the inhibition of cell death and protects against oxidative, endoplasmic reticulum and mitochondrial stress by inducing secretion of the cytoprotective pigment epithelium-derived growth factor (PEDF) and probably other protective transcripts in a GNA13/RHOA/SRE-dependent manner. Forms dynamic heteroreceptor complexes with HTR1A and GALR1 depending on cell type or specific physiological states, resulting in signaling diversity: HTR1A-GPR39 shows additive increase in signaling along the serum response element (SRE) and NF-kappa-B pathways while GALR1 acts as an antagonist blocking SRE. This chain is G-protein coupled receptor 39 (Gpr39), found in Mus musculus (Mouse).